A 332-amino-acid chain; its full sequence is MESLLNQLSSMTVVVADTGDLEAIKKYHPRDATTNPSLILAAAQMPAYQSLIDQALTTSREMLGTSAAKVDVVKEALDELCVVFGKEILKLIPGRVSTEVDARLSFDTDATIEKARKIIAKYNADGISNDRVLIKIASTWEGIKAAEVLEKENIHCNLTLLFNFYQAVACAEAGVTLISPFVGRILDWYKSATGRDSYPATEDPGVVSVTKIFNYFKSNGYKTEVMGASFRNIEEITELAGCDLLTISPKLLQQLNETHTDLPIKLNAQKPLVIEEKIHLDQTSFELMMAGDKMATEKLDDGISGFSKAIDKLENQLNERLELIEGGVALTL.

The Schiff-base intermediate with substrate role is filled by Lys-135.

Belongs to the transaldolase family. Type 1 subfamily. In terms of assembly, homodimer.

The protein resides in the cytoplasm. It carries out the reaction D-sedoheptulose 7-phosphate + D-glyceraldehyde 3-phosphate = D-erythrose 4-phosphate + beta-D-fructose 6-phosphate. It participates in carbohydrate degradation; pentose phosphate pathway; D-glyceraldehyde 3-phosphate and beta-D-fructose 6-phosphate from D-ribose 5-phosphate and D-xylulose 5-phosphate (non-oxidative stage): step 2/3. Transaldolase is important for the balance of metabolites in the pentose-phosphate pathway. The protein is Transaldolase of Prochlorococcus marinus (strain NATL1A).